The chain runs to 845 residues: Protein translocase subunit SecA 1 (845 aa).

ATP contacts are provided by residues Gln85, 103-107, and Asp492; that span reads GEGKT.

Belongs to the SecA family. As to quaternary structure, monomer and homodimer. Part of the essential Sec protein translocation apparatus which comprises SecA, SecYEG and auxiliary proteins SecDF. Other proteins may also be involved.

It localises to the cell membrane. It is found in the cytoplasm. The catalysed reaction is ATP + H2O + cellular proteinSide 1 = ADP + phosphate + cellular proteinSide 2.. Part of the Sec protein translocase complex. Interacts with the SecYEG preprotein conducting channel. Has a central role in coupling the hydrolysis of ATP to the transfer of proteins into and across the cell membrane, serving as an ATP-driven molecular motor driving the stepwise translocation of polypeptide chains across the membrane. This Corynebacterium efficiens (strain DSM 44549 / YS-314 / AJ 12310 / JCM 11189 / NBRC 100395) protein is Protein translocase subunit SecA 1.